A 196-amino-acid polypeptide reads, in one-letter code: Imidazoleglycerol-phosphate dehydratase (196 aa).

Belongs to the imidazoleglycerol-phosphate dehydratase family.

The protein localises to the cytoplasm. It catalyses the reaction D-erythro-1-(imidazol-4-yl)glycerol 3-phosphate = 3-(imidazol-4-yl)-2-oxopropyl phosphate + H2O. Its pathway is amino-acid biosynthesis; L-histidine biosynthesis; L-histidine from 5-phospho-alpha-D-ribose 1-diphosphate: step 6/9. This Desulforudis audaxviator (strain MP104C) protein is Imidazoleglycerol-phosphate dehydratase.